A 530-amino-acid chain; its full sequence is CTP synthase (530 aa).

The amidoligase domain stretch occupies residues 1 to 267 (MTKYVFVTGG…DDFVLNHFKM (267 aa)). S13 is a CTP binding site. Residue S13 coordinates UTP. 14-19 (SLGKGI) serves as a coordination point for ATP. Y54 serves as a coordination point for L-glutamine. An ATP-binding site is contributed by D71. Residues D71 and E141 each contribute to the Mg(2+) site. CTP-binding positions include 148–150 (DIE), 188–193 (KTKPTQ), and K224. Residues 188–193 (KTKPTQ) and K224 each bind UTP. ATP is bound at residue 240–242 (RDA). Residues 292-530 (KIALVGKYIE…LFKAFIGATM (239 aa)) enclose the Glutamine amidotransferase type-1 domain. G354 contributes to the L-glutamine binding site. C381 (nucleophile; for glutamine hydrolysis) is an active-site residue. L-glutamine-binding positions include 382 to 385 (LGMQ), E405, and R463. Catalysis depends on residues H508 and E510.

The protein belongs to the CTP synthase family. As to quaternary structure, homotetramer.

The catalysed reaction is UTP + L-glutamine + ATP + H2O = CTP + L-glutamate + ADP + phosphate + 2 H(+). It carries out the reaction L-glutamine + H2O = L-glutamate + NH4(+). The enzyme catalyses UTP + NH4(+) + ATP = CTP + ADP + phosphate + 2 H(+). It participates in pyrimidine metabolism; CTP biosynthesis via de novo pathway; CTP from UDP: step 2/2. Its activity is regulated as follows. Allosterically activated by GTP, when glutamine is the substrate; GTP has no effect on the reaction when ammonia is the substrate. The allosteric effector GTP functions by stabilizing the protein conformation that binds the tetrahedral intermediate(s) formed during glutamine hydrolysis. Inhibited by the product CTP, via allosteric rather than competitive inhibition. Catalyzes the ATP-dependent amination of UTP to CTP with either L-glutamine or ammonia as the source of nitrogen. Regulates intracellular CTP levels through interactions with the four ribonucleotide triphosphates. This is CTP synthase from Latilactobacillus sakei subsp. sakei (strain 23K) (Lactobacillus sakei subsp. sakei).